We begin with the raw amino-acid sequence, 736 residues long: Gephyrin (736 aa).

The segment at 14–166 (QIRVGVLTVS…FILPALPHAI (153 aa)) is MPT Mo-transferase. Residues 140 to 316 (LIINLPGSKK…VDITKVARRH (177 aa)) form an interaction with GABARAP region. Disordered stretches follow at residues 181-232 (DELE…DSSS) and 260-290 (TASLSTTPSESPRAQATSRLSTASCPTPKVQ). Pro residues predominate over residues 187 to 199 (PSPPPPLSPPPTT). Residues Ser188 and Ser194 each carry the phosphoserine modification. Thr198 bears the Phosphothreonine mark. Position 200 is a phosphoserine (Ser200). Cys212 carries S-palmitoyl cysteine lipidation. Residues 261–290 (ASLSTTPSESPRAQATSRLSTASCPTPKVQ) are compositionally biased toward polar residues. Phosphoserine is present on Ser262. Residues Thr265 and Thr266 each carry the phosphothreonine modification. A phosphoserine mark is found at Ser268 and Ser270. Cys284 carries the S-palmitoyl cysteine lipid modification. Ser305 carries the post-translational modification Phosphoserine. The interval 326–736 (MDKAFITVLE…VVDVMVIGRL (411 aa)) is MPT adenylyltransferase.

This sequence in the N-terminal section; belongs to the MoaB/Mog family. In the C-terminal section; belongs to the MoeA family. As to quaternary structure, homotrimer, homodimer and homooligomer. Interacts with GABARAP. Interacts with SRGAP2 (via SH3 domain). Interacts with GABRA3. Interacts with GLRB. GABRA3 and GLRB occupy overlapping binding sites. Interacts with ARHGAP32; IQSEC3, INSYN1 and INSYN2A. The cofactor is Mg(2+). Post-translationally, palmitoylated. Palmitoylation is stimulated by GABA type A receptors activity. Palmitoylation by ZDHHC12 regulates clustering at synapses.

Its subcellular location is the postsynaptic cell membrane. It is found in the cell membrane. The protein resides in the cytoplasm. The protein localises to the cytosol. It localises to the cytoskeleton. Its subcellular location is the cell projection. It is found in the dendrite. The protein resides in the postsynaptic density. The catalysed reaction is molybdopterin + ATP + H(+) = adenylyl-molybdopterin + diphosphate. It catalyses the reaction adenylyl-molybdopterin + molybdate = Mo-molybdopterin + AMP + H(+). Its pathway is cofactor biosynthesis; molybdopterin biosynthesis. Inhibited by copper and tungsten. In terms of biological role, microtubule-associated protein involved in membrane protein-cytoskeleton interactions. It is thought to anchor the inhibitory glycine receptor (GLYR) to subsynaptic microtubules. Acts as a major instructive molecule at inhibitory synapses, where it also clusters GABA type A receptors. Its function is as follows. Also has a catalytic activity and catalyzes two steps in the biosynthesis of the molybdenum cofactor. In the first step, molybdopterin is adenylated. Subsequently, molybdate is inserted into adenylated molybdopterin and AMP is released. This Homo sapiens (Human) protein is Gephyrin.